Here is a 256-residue protein sequence, read N- to C-terminus: Thiazole synthase (256 aa).

Lysine 96 serves as the catalytic Schiff-base intermediate with DXP. 1-deoxy-D-xylulose 5-phosphate is bound by residues glycine 157, 183-184 (AG), and 205-206 (NT).

It belongs to the ThiG family. In terms of assembly, homotetramer. Forms heterodimers with either ThiH or ThiS.

It is found in the cytoplasm. It carries out the reaction [ThiS sulfur-carrier protein]-C-terminal-Gly-aminoethanethioate + 2-iminoacetate + 1-deoxy-D-xylulose 5-phosphate = [ThiS sulfur-carrier protein]-C-terminal Gly-Gly + 2-[(2R,5Z)-2-carboxy-4-methylthiazol-5(2H)-ylidene]ethyl phosphate + 2 H2O + H(+). The protein operates within cofactor biosynthesis; thiamine diphosphate biosynthesis. Functionally, catalyzes the rearrangement of 1-deoxy-D-xylulose 5-phosphate (DXP) to produce the thiazole phosphate moiety of thiamine. Sulfur is provided by the thiocarboxylate moiety of the carrier protein ThiS. In vitro, sulfur can be provided by H(2)S. This chain is Thiazole synthase, found in Bacillus cereus (strain AH187).